The primary structure comprises 597 residues: Probable E3 ubiquitin-protein ligase ARI1 (597 aa).

The TRIAD supradomain stretch occupies residues 119–333; the sequence is SQMSCDVCME…IAGHSCGRYQ (215 aa). Residues Cys123, Cys126, Cys140, His142, Cys145, Cys148, Cys167, Cys172, Cys214, Cys220, Cys236, Cys238, Cys243, Cys246, His251, Cys256, Cys283, and Cys286 each contribute to the Zn(2+) site. The segment at 123 to 172 adopts an RING-type 1 zinc-finger fold; that stretch reads CDVCMEDLPGDHMTRMDCGHCFCNNCWTEHFTVQINEGQSKRIRCMAHQC. An IBR-type zinc finger spans residues 194–256; it reads AKFDRYLLES…LCQAHSPCSC (63 aa). The RING-type 2; atypical zinc finger occupies 283 to 311; the sequence is CPKCYKPVEKNGGCNLVRCICGQCFCWLC. Cys296 is a catalytic residue. Residues Cys301, Cys303, Cys308, Cys311, His319, and Cys329 each contribute to the Zn(2+) site. The interval 536 to 575 is disordered; the sequence is FQPLDSGTSGVTSRPEQASGSRSSEDTICSSSQKRPKKEG. Positions 540 to 568 are enriched in polar residues; that stretch reads DSGTSGVTSRPEQASGSRSSEDTICSSSQ.

This sequence belongs to the RBR family. Ariadne subfamily. Zn(2+) is required as a cofactor. Ubiquitous.

It catalyses the reaction [E2 ubiquitin-conjugating enzyme]-S-ubiquitinyl-L-cysteine + [acceptor protein]-L-lysine = [E2 ubiquitin-conjugating enzyme]-L-cysteine + [acceptor protein]-N(6)-ubiquitinyl-L-lysine.. It functions in the pathway protein modification; protein ubiquitination. Functionally, might act as an E3 ubiquitin-protein ligase, or as part of E3 complex, which accepts ubiquitin from specific E2 ubiquitin-conjugating enzymes and then transfers it to substrates. The chain is Probable E3 ubiquitin-protein ligase ARI1 (ARI1) from Arabidopsis thaliana (Mouse-ear cress).